Here is a 629-residue protein sequence, read N- to C-terminus: uncharacterized protein (629 aa).

N-acetylmethionine is present on Met-1. Residues 308-395 (VDPEPEPDPP…PGRRSRARNA (88 aa)) are disordered. Residues 322–334 (SANEPASQPNSRS) are compositionally biased toward polar residues. The 137-residue stretch at 451 to 587 (LVIFVVDASG…VAEGAAAVVV (137 aa)) folds into the VWFA domain.

It belongs to the Mg-chelatase subunits D/I family.

This is an uncharacterized protein from Mycobacterium tuberculosis (strain ATCC 25618 / H37Rv).